The sequence spans 134 residues: MKLKGRGIVKGVAEGELVVSRKPLSFLGGVDPNTGIITDPESDIQGEKITGKILAFPRGKGSTVGSYVIYALAKKGTGPKAIIVEEAEAIVAVGAIIAGIPLVTGIDISKLKSGMKVRVDGERGEVEIIAQGDL.

The Proton acceptor role is filled by S62.

This sequence belongs to the AcnX type II small subunit family. In terms of assembly, heterodimer composed of a large subunit (PMDh-L) and a small subunit (PMDh-S).

It catalyses the reaction (R)-5-phosphomevalonate = (2E)-3-methyl-5-phosphooxypent-2-enoate + H2O. It participates in isoprenoid biosynthesis; isopentenyl diphosphate biosynthesis via mevalonate pathway. In terms of biological role, component of a hydro-lyase that catalyzes the dehydration of mevalonate 5-phosphate (MVA5P) to form trans-anhydromevalonate 5-phosphate (tAHMP). Involved in the archaeal mevalonate (MVA) pathway, which provides fundamental precursors for isoprenoid biosynthesis, such as isopentenyl diphosphate (IPP) and dimethylallyl diphosphate (DMAPP). This Pyrococcus furiosus (strain ATCC 43587 / DSM 3638 / JCM 8422 / Vc1) protein is Phosphomevalonate dehydratase small subunit.